The sequence spans 568 residues: Type 3 secretion system secretin (568 aa).

Positions Met-1–Ala-15 are cleaved as a signal peptide. Residues Tyr-203–Asp-292 form a disordered region. Residues Leu-243–Gln-257 show a composition bias toward gly residues. Basic and acidic residues predominate over residues Asn-273–Gly-284.

Belongs to the bacterial secretin family. T3SS SctC subfamily. The core secretion machinery of the T3SS is composed of approximately 20 different proteins, including cytoplasmic components, a base, an export apparatus and a needle. This subunit is part of the base, which anchors the injectisome in the bacterial cell envelope. Forms a stable homooligomeric complex.

It localises to the cell outer membrane. In terms of biological role, component of the type III secretion system (T3SS), also called injectisome, which is used to inject bacterial effector proteins into eukaryotic host cells. Forms a ring-shaped multimeric structure with an apparent central pore in the outer membrane. The polypeptide is Type 3 secretion system secretin (Ralstonia nicotianae (strain ATCC BAA-1114 / GMI1000) (Ralstonia solanacearum)).